We begin with the raw amino-acid sequence, 310 residues long: MKIIIDTDPGQDDAITALLAIASPEIELLGVTTVAGNVPVSMTTRNALQMLDLAGRPDIPVYAGSNKPLLRAPITATHVHGASGFEGAVLPPPSRKENEGHAVDFIIDTLRNNEPGTITICTIGPLTNIALALNKAPEVIQRAKQIVMMAGAFSEVGNITPAAEFNIYVDPHAAQMVLSSGIPIVMMPLDITHQLHTSAKRIARMEALPNRVGPVVAAWLRMEKAYEAKKYGTDGGPLHDPNTVMWLLRPDIYSGRKVNVQIETQSELTMGMSVVDWWQVGLLPANVTFLRTVDDDEFYEVLIERLGRLP.

Residue H239 is part of the active site.

Belongs to the IUNH family.

It localises to the cytoplasm. The protein localises to the nucleus. This is an uncharacterized protein from Schizosaccharomyces pombe (strain 972 / ATCC 24843) (Fission yeast).